We begin with the raw amino-acid sequence, 402 residues long: Endo-polygalacturonase (402 aa).

Positions M1 to S23 are cleaved as a signal peptide. The Proton donor role is filled by D249. The active site involves H277.

Belongs to the glycosyl hydrolase 28 family. As to quaternary structure, monomer.

It localises to the secreted. The catalysed reaction is (1,4-alpha-D-galacturonosyl)n+m + H2O = (1,4-alpha-D-galacturonosyl)n + (1,4-alpha-D-galacturonosyl)m.. Involved in maceration and soft-rotting of plant tissue. The sequence is that of Endo-polygalacturonase (peh) from Pectobacterium carotovorum subsp. carotovorum (Erwinia carotovora subsp. carotovora).